Consider the following 841-residue polypeptide: Translation initiation factor IF-2 (841 aa).

The 168-residue stretch at 341–508 folds into the tr-type G domain; the sequence is NRAPVVTIMG…AILLQAEILE (168 aa). A G1 region spans residues 350–357; it reads GHVDHGKT. 350–357 serves as a coordination point for GTP; sequence GHVDHGKT. The G2 stretch occupies residues 375–379; it reads GITQC. A G3 region spans residues 396–399; sequence DTPG. GTP is bound by residues 396–400 and 450–453; these read DTPGH and NKID. A G4 region spans residues 450 to 453; it reads NKID. A G5 region spans residues 486 to 488; the sequence is SAK.

The protein belongs to the TRAFAC class translation factor GTPase superfamily. Classic translation factor GTPase family. IF-2 subfamily.

It is found in the cytoplasm. In terms of biological role, one of the essential components for the initiation of protein synthesis. Protects formylmethionyl-tRNA from spontaneous hydrolysis and promotes its binding to the 30S ribosomal subunits. Also involved in the hydrolysis of GTP during the formation of the 70S ribosomal complex. The protein is Translation initiation factor IF-2 of Wigglesworthia glossinidia brevipalpis.